A 132-amino-acid polypeptide reads, in one-letter code: Large ribosomal subunit protein uL22 (132 aa).

Belongs to the universal ribosomal protein uL22 family. Part of the 50S ribosomal subunit.

Its function is as follows. This protein binds specifically to 23S rRNA; its binding is stimulated by other ribosomal proteins, e.g. L4, L17, and L20. It is important during the early stages of 50S assembly. It makes multiple contacts with different domains of the 23S rRNA in the assembled 50S subunit and ribosome. In terms of biological role, the globular domain of the protein is located near the polypeptide exit tunnel on the outside of the subunit, while an extended beta-hairpin is found that lines the wall of the exit tunnel in the center of the 70S ribosome. The polypeptide is Large ribosomal subunit protein uL22 (Pelagibacter ubique (strain HTCC1062)).